The primary structure comprises 582 residues: Aspartate--tRNA(Asp/Asn) ligase (582 aa).

L-aspartate is bound at residue Glu177. The segment at 201–204 (QLFK) is aspartate. Arg223 provides a ligand contact to L-aspartate. Residues 223-225 (RDE) and Gln232 each bind ATP. Residue His447 participates in L-aspartate binding. Glu481 is a binding site for ATP. Arg488 is a binding site for L-aspartate. 533 to 536 (GLDR) contributes to the ATP binding site.

Belongs to the class-II aminoacyl-tRNA synthetase family. Type 1 subfamily. As to quaternary structure, homodimer.

The protein resides in the cytoplasm. The catalysed reaction is tRNA(Asx) + L-aspartate + ATP = L-aspartyl-tRNA(Asx) + AMP + diphosphate. Aspartyl-tRNA synthetase with relaxed tRNA specificity since it is able to aspartylate not only its cognate tRNA(Asp) but also tRNA(Asn). Reaction proceeds in two steps: L-aspartate is first activated by ATP to form Asp-AMP and then transferred to the acceptor end of tRNA(Asp/Asn). In Chlamydia trachomatis serovar L2 (strain ATCC VR-902B / DSM 19102 / 434/Bu), this protein is Aspartate--tRNA(Asp/Asn) ligase.